A 286-amino-acid chain; its full sequence is Probable endonuclease 4 (286 aa).

Zn(2+) is bound by residues His-67, His-107, Glu-144, Asp-178, His-181, His-215, Asp-228, His-230, and Glu-260.

Belongs to the AP endonuclease 2 family. Zn(2+) serves as cofactor.

The catalysed reaction is Endonucleolytic cleavage to 5'-phosphooligonucleotide end-products.. Its function is as follows. Endonuclease IV plays a role in DNA repair. It cleaves phosphodiester bonds at apurinic or apyrimidinic (AP) sites, generating a 3'-hydroxyl group and a 5'-terminal sugar phosphate. This is Probable endonuclease 4 from Chloroflexus aggregans (strain MD-66 / DSM 9485).